The sequence spans 250 residues: Type-1Ab cytolytic delta-endotoxin (250 aa).

This sequence belongs to the cyt1/cyt2 endotoxin family. In terms of processing, active after proteolytic processing.

In terms of biological role, kills the larvae of dipteran insects by making pores in the epithelial cell membrane of the insect midgut. This is Type-1Ab cytolytic delta-endotoxin (cyt1Ab1) from Bacillus thuringiensis subsp. medellin.